Here is a 383-residue protein sequence, read N- to C-terminus: S-adenosylmethionine synthase (383 aa).

His15 is an ATP binding site. Asp17 provides a ligand contact to Mg(2+). Glu43 is a binding site for K(+). Residues Glu56 and Gln99 each coordinate L-methionine. Positions 99-109 are flexible loop; the sequence is QSPDINQGVDR. ATP-binding positions include 164 to 166, 230 to 231, Asp239, 245 to 246, Ala262, and Lys266; these read DAK, RF, and RK. Asp239 is an L-methionine binding site. Lys270 contacts L-methionine.

This sequence belongs to the AdoMet synthase family. As to quaternary structure, homotetramer; dimer of dimers. The cofactor is Mg(2+). It depends on K(+) as a cofactor.

The protein resides in the cytoplasm. The enzyme catalyses L-methionine + ATP + H2O = S-adenosyl-L-methionine + phosphate + diphosphate. The protein operates within amino-acid biosynthesis; S-adenosyl-L-methionine biosynthesis; S-adenosyl-L-methionine from L-methionine: step 1/1. Its function is as follows. Catalyzes the formation of S-adenosylmethionine (AdoMet) from methionine and ATP. The overall synthetic reaction is composed of two sequential steps, AdoMet formation and the subsequent tripolyphosphate hydrolysis which occurs prior to release of AdoMet from the enzyme. The chain is S-adenosylmethionine synthase from Shewanella baltica (strain OS223).